Here is an 81-residue protein sequence, read N- to C-terminus: MRHLLGLPQLASRAFSTTVRQMKNRVPEKQKIFLEDNGLPVHIKGGTTDAILYRLTMTLTVVGTGYSLYWLLIAAMPKRKA.

Residues 1 to 21 (MRHLLGLPQLASRAFSTTVRQ) constitute a mitochondrion transit peptide. A helical transmembrane segment spans residues 51–72 (ILYRLTMTLTVVGTGYSLYWLL).

It belongs to the cytochrome c oxidase VIIa family. Component of the complex IV (CIV, cytochrome c oxidase). The complex exists as a monomer or a dimer and forms supercomplexes (SCs) in the inner mitochondrial membrane with NADH-ubiquinone oxidoreductase (complex I, CI) and ubiquinol-cytochrome c oxidoreductase (cytochrome b-c1 complex, complex III, CIII), resulting in different assemblies (supercomplex SCI(1)III(2)IV(1) and megacomplex MCI(2)III(2)IV(2)).

It is found in the mitochondrion inner membrane. It functions in the pathway energy metabolism; oxidative phosphorylation. In terms of biological role, component of the mitochondrial respiratory complex IV (CIV, also named cytochrome c oxidase complex), the last enzyme in the mitochondrial electron transport chain which drives oxidative phosphorylation. The CIV complex is the component of the respiratory chain that catalyzes the reduction of oxygen to water. Acts as an assembly factor that specifically drives the homodimerization of CIV complexes, mediating the formation of mitochondrial respiratory supercomplexes (respirasomes) containing two CIV: supercomplxes with two molecules of CIV show improved activity. The protein is Cytochrome c oxidase subunit 7A1, mitochondrial of Danio rerio (Zebrafish).